Reading from the N-terminus, the 530-residue chain is Histone-arginine methyltransferase CARMER (530 aa).

The 310-residue stretch at 141-450 folds into the SAM-dependent MTase PRMT-type domain; the sequence is ASQYFQFYGY…QSYDVTIDLH (310 aa). S-adenosyl-L-methionine is bound by residues glutamine 154, arginine 163, glycine 187, glutamate 209, glutamate 238, and threonine 266. Asymmetric dimethylarginine; by autocatalysis is present on arginine 501.

It belongs to the class I-like SAM-binding methyltransferase superfamily. Protein arginine N-methyltransferase family. As to quaternary structure, homodimer. The dimethylated protein is the major form.

It is found in the cytoplasm. Its subcellular location is the nucleus. The enzyme catalyses L-arginyl-[protein] + 2 S-adenosyl-L-methionine = N(omega),N(omega)-dimethyl-L-arginyl-[protein] + 2 S-adenosyl-L-homocysteine + 2 H(+). Functionally, methylates (mono- and asymmetric dimethylation) the guanidino nitrogens of arginyl residues in proteins. May methylate histone H3 at 'Arg-17' and activate transcription via chromatin remodeling. The protein is Histone-arginine methyltransferase CARMER (Art4) of Drosophila erecta (Fruit fly).